The sequence spans 628 residues: DNA ligase (628 aa).

Residues 36 to 40, 85 to 86, and Glu-117 contribute to the NAD(+) site; these read DVEYD and SL. Lys-119 functions as the N6-AMP-lysine intermediate in the catalytic mechanism. The NAD(+) site is built by Arg-140, Glu-174, Lys-309, and Lys-333. Cys-427, Cys-430, Cys-446, and Cys-452 together coordinate Zn(2+).

Belongs to the NAD-dependent DNA ligase family. LigA subfamily. Mg(2+) is required as a cofactor. Mn(2+) serves as cofactor.

It carries out the reaction NAD(+) + (deoxyribonucleotide)n-3'-hydroxyl + 5'-phospho-(deoxyribonucleotide)m = (deoxyribonucleotide)n+m + AMP + beta-nicotinamide D-nucleotide.. Functionally, DNA ligase that catalyzes the formation of phosphodiester linkages between 5'-phosphoryl and 3'-hydroxyl groups in double-stranded DNA using NAD as a coenzyme and as the energy source for the reaction. It is essential for DNA replication and repair of damaged DNA. This is DNA ligase from Tropheryma whipplei (strain Twist) (Whipple's bacillus).